We begin with the raw amino-acid sequence, 349 residues long: Acyl-CoA Delta(11) desaturase (349 aa).

2 helical membrane passes run phenylalanine 41–serine 61 and threonine 66–histidine 86. The Histidine box-1 signature appears at histidine 86–histidine 91. The short motif at histidine 123–histidine 127 is the Histidine box-2 element. The helical transmembrane segment at alanine 184–tryptophan 204 threads the bilayer. The Histidine box-3 motif lies at histidine 263 to histidine 267. A helical membrane pass occupies residues phenylalanine 282–leucine 302.

It belongs to the fatty acid desaturase type 1 family. Fe cation is required as a cofactor. As to expression, adult female pheromone gland. Increases by two or three orders of magnitude during the first 2 days after adult eclosion.

It is found in the endoplasmic reticulum membrane. It catalyses the reaction an 11,12-saturated fatty acyl-CoA + 2 Fe(II)-[cytochrome b5] + O2 + 2 H(+) = an (11Z)-Delta(11)-fatty acyl-CoA + 2 Fe(III)-[cytochrome b5] + 2 H2O. Its function is as follows. Catalyzes the formation of Delta(11) fatty acyl precursors in the pheromone gland. The polypeptide is Acyl-CoA Delta(11) desaturase (D11DS) (Trichoplusia ni (Cabbage looper)).